The sequence spans 362 residues: MTAELDLVSITQAPKALLHDHLDGGLRPGTVLDLARETGYENLPAQDETALASWFRTAADSGSLEQYLETFAHTVGVMQTASALHRVAAECVEDLAADGVVYAEVRFAPELHIDAGLTLDDVMDAVLAGFADGERQASAAGKRIKVRTLVTAMRHAARSREIAELAVKFRDRGAVGFDIAGAEAGYPPTRHLDAFEYMRNANSRFTIHAGEGFGLPSIHEAIAFCGADRLGHGVRIVDDIDIGPDGTAHLGRLSSLLRDKRVPLELCPSSNVQTGAVESLADHPFDLLARLRFRVTVNTDNRLMSDTTMSREMLRLVETFGYGWSDLQRFTINAMKSAFIPFDERLAIIDDVIKPGYAVLIG.

2 residues coordinate Zn(2+): His-19 and His-21. Substrate contacts are provided by His-21, Asp-23, and Gly-181. Residue His-208 coordinates Zn(2+). Glu-211 functions as the Proton donor in the catalytic mechanism. Asp-300 lines the Zn(2+) pocket.

It belongs to the metallo-dependent hydrolases superfamily. Adenosine and AMP deaminases family. Adenosine deaminase subfamily. The cofactor is Zn(2+).

It carries out the reaction adenosine + H2O + H(+) = inosine + NH4(+). The enzyme catalyses 2'-deoxyadenosine + H2O + H(+) = 2'-deoxyinosine + NH4(+). In terms of biological role, catalyzes the hydrolytic deamination of adenosine and 2-deoxyadenosine. The sequence is that of Adenosine deaminase from Mycobacteroides abscessus (strain ATCC 19977 / DSM 44196 / CCUG 20993 / CIP 104536 / JCM 13569 / NCTC 13031 / TMC 1543 / L948) (Mycobacterium abscessus).